Consider the following 120-residue polypeptide: UPF0342 protein Csac_0863 (120 aa).

The protein belongs to the UPF0342 family.

This is UPF0342 protein Csac_0863 from Caldicellulosiruptor saccharolyticus (strain ATCC 43494 / DSM 8903 / Tp8T 6331).